The chain runs to 718 residues: Catalase-peroxidase (718 aa).

Residues 98–219 constitute a cross-link (tryptophyl-tyrosyl-methioninium (Trp-Tyr) (with M-245)); sequence WHAAGTYRMG…LAATEMGLIY (122 aa). Residue His99 is the Proton acceptor of the active site. A cross-link (tryptophyl-tyrosyl-methioninium (Tyr-Met) (with W-98)) is located at residues 219-245; the sequence is YVNPEGPQASGDPRSAAPFIRATFGNM. Heme b is bound at residue His260.

This sequence belongs to the peroxidase family. Peroxidase/catalase subfamily. Homodimer or homotetramer. Heme b serves as cofactor. In terms of processing, formation of the three residue Trp-Tyr-Met cross-link is important for the catalase, but not the peroxidase activity of the enzyme.

It catalyses the reaction H2O2 + AH2 = A + 2 H2O. The catalysed reaction is 2 H2O2 = O2 + 2 H2O. Bifunctional enzyme with both catalase and broad-spectrum peroxidase activity. The sequence is that of Catalase-peroxidase from Acinetobacter baumannii (strain AB307-0294).